The sequence spans 248 residues: Triosephosphate isomerase (248 aa).

Position 9-11 (Asn-9–Lys-11) interacts with substrate. Catalysis depends on His-94, which acts as the Electrophile. Catalysis depends on Glu-166, which acts as the Proton acceptor. Substrate contacts are provided by residues Gly-172, Ser-211, and Gly-232–Gly-233.

Belongs to the triosephosphate isomerase family. As to quaternary structure, homodimer.

The protein localises to the cytoplasm. It carries out the reaction D-glyceraldehyde 3-phosphate = dihydroxyacetone phosphate. It functions in the pathway carbohydrate biosynthesis; gluconeogenesis. It participates in carbohydrate degradation; glycolysis; D-glyceraldehyde 3-phosphate from glycerone phosphate: step 1/1. Involved in the gluconeogenesis. Catalyzes stereospecifically the conversion of dihydroxyacetone phosphate (DHAP) to D-glyceraldehyde-3-phosphate (G3P). This Ruthia magnifica subsp. Calyptogena magnifica protein is Triosephosphate isomerase.